Here is a 416-residue protein sequence, read N- to C-terminus: E3 ubiquitin-protein ligase makorin-2 (416 aa).

2 C3H1-type zinc fingers span residues 2 to 29 (STKQ…HDLA) and 31 to 58 (SKPS…HTKP). A disordered region spans residues 61–144 (AAGGAVGPAP…DPQTSPEMKP (84 aa)). Residues 95 to 123 (HSNEPGKREKKTLVLRDRNLTGLAEDKTP) show a composition bias toward basic and acidic residues. Ser-139 carries the post-translational modification Phosphoserine. The C3H1-type 3 zinc-finger motif lies at 165 to 192 (SNEPQLCPYAAAGECRFGDACVYLHGDM). The tract at residues 193–222 (CEICRLQVLHPFDPEQRKAHEKMCMSTFEH) is makorin-type Cys-His. The segment at 238–292 (CSICMEVILEKASASERRFGILSNCSHTYCLSCIRQWRCAKQFENPIIKSCPECR) adopts an RING-type zinc-finger fold. The segment at 321–350 (GMGKKACKYFEQGKGTCPFGSKCLYRHAYP) adopts a C3H1-type 4 zinc-finger fold.

As to quaternary structure, interacts with PDLIM2 (via LIM zinc-binding domain). Interacts with RELA. Highly expressed in the testis, and lower expression in the brain, thymus, heart, lung, liver, spleen, kidney, ovary, uterus, and seminal vesicle (at protein level). Expressed in primary immune cells, such as CD4-positive and CD8-positive T cells, CD19-positive B cells and CD11c-positive dendritic cells, and in embryonic fibroblasts (at protein level).

Its subcellular location is the cytoplasm. The protein localises to the nucleus. The enzyme catalyses S-ubiquitinyl-[E2 ubiquitin-conjugating enzyme]-L-cysteine + [acceptor protein]-L-lysine = [E2 ubiquitin-conjugating enzyme]-L-cysteine + N(6)-ubiquitinyl-[acceptor protein]-L-lysine.. The protein operates within protein modification; protein ubiquitination. In terms of biological role, E3 ubiquitin ligase catalyzing the covalent attachment of ubiquitin moieties onto substrate proteins. Promotes the polyubiquitination and proteasome-dependent degradation of RELA/p65, thereby suppressing RELA-mediated NF-kappa-B transactivation and negatively regulating inflammatory responses. Plays a role in the regulation of spermiation and in male fertility. This Mus musculus (Mouse) protein is E3 ubiquitin-protein ligase makorin-2 (Mkrn2).